A 280-amino-acid chain; its full sequence is MNDQTFMKLMQVLPKSALSTVVGMATRLPVPAPVHQAAMRAFAKAYNVDMEEAEHSFEHYPTFAQFFTRGLKPGLRPVDAGEKVVVSPVDGRVSQVGYSDYGRCLQAKGIEYTVDELLGDSEAAKPFYGGAWTTIYLSPRDYHRIHAPLGGTITGYAYIPGEFWPVNPASVKNKQSLFCVNERLVTYLDTVAGKCAVVKVGATCVSRIKAAYDEVTTHTGQPGKVHRYGSAMPVEKGGELGRFEMGSTVILLFEPKRVTWDDSLQEEAVVRLGKRIGVIT.

Residues Asp90, His146, and Ser247 each act as charge relay system; for autoendoproteolytic cleavage activity in the active site. Ser247 functions as the Schiff-base intermediate with substrate; via pyruvic acid; for decarboxylase activity in the catalytic mechanism. Pyruvic acid (Ser); by autocatalysis is present on Ser247.

It belongs to the phosphatidylserine decarboxylase family. PSD-B subfamily. Prokaryotic type I sub-subfamily. In terms of assembly, heterodimer of a large membrane-associated beta subunit and a small pyruvoyl-containing alpha subunit. The cofactor is pyruvate. In terms of processing, is synthesized initially as an inactive proenzyme. Formation of the active enzyme involves a self-maturation process in which the active site pyruvoyl group is generated from an internal serine residue via an autocatalytic post-translational modification. Two non-identical subunits are generated from the proenzyme in this reaction, and the pyruvate is formed at the N-terminus of the alpha chain, which is derived from the carboxyl end of the proenzyme. The autoendoproteolytic cleavage occurs by a canonical serine protease mechanism, in which the side chain hydroxyl group of the serine supplies its oxygen atom to form the C-terminus of the beta chain, while the remainder of the serine residue undergoes an oxidative deamination to produce ammonia and the pyruvoyl prosthetic group on the alpha chain. During this reaction, the Ser that is part of the protease active site of the proenzyme becomes the pyruvoyl prosthetic group, which constitutes an essential element of the active site of the mature decarboxylase.

Its subcellular location is the cell membrane. The catalysed reaction is a 1,2-diacyl-sn-glycero-3-phospho-L-serine + H(+) = a 1,2-diacyl-sn-glycero-3-phosphoethanolamine + CO2. The protein operates within phospholipid metabolism; phosphatidylethanolamine biosynthesis; phosphatidylethanolamine from CDP-diacylglycerol: step 2/2. In terms of biological role, catalyzes the formation of phosphatidylethanolamine (PtdEtn) from phosphatidylserine (PtdSer). The chain is Phosphatidylserine decarboxylase proenzyme from Myxococcus xanthus (strain DK1622).